The sequence spans 571 residues: Proline--tRNA ligase (571 aa).

This sequence belongs to the class-II aminoacyl-tRNA synthetase family. ProS type 1 subfamily. Homodimer.

The protein resides in the cytoplasm. The catalysed reaction is tRNA(Pro) + L-proline + ATP = L-prolyl-tRNA(Pro) + AMP + diphosphate. In terms of biological role, catalyzes the attachment of proline to tRNA(Pro) in a two-step reaction: proline is first activated by ATP to form Pro-AMP and then transferred to the acceptor end of tRNA(Pro). As ProRS can inadvertently accommodate and process non-cognate amino acids such as alanine and cysteine, to avoid such errors it has two additional distinct editing activities against alanine. One activity is designated as 'pretransfer' editing and involves the tRNA(Pro)-independent hydrolysis of activated Ala-AMP. The other activity is designated 'posttransfer' editing and involves deacylation of mischarged Ala-tRNA(Pro). The misacylated Cys-tRNA(Pro) is not edited by ProRS. The polypeptide is Proline--tRNA ligase (Shewanella baltica (strain OS185)).